A 208-amino-acid chain; its full sequence is Ion-translocating oxidoreductase complex subunit G (208 aa).

Residues 9–29 (GVTLAVFAALTTGLTAMVNAL) traverse the membrane as a helical segment. Thr174 is modified (FMN phosphoryl threonine).

Belongs to the RnfG family. In terms of assembly, the complex is composed of six subunits: RnfA, RnfB, RnfC, RnfD, RnfE and RnfG. Requires FMN as cofactor.

The protein resides in the cell inner membrane. Its function is as follows. Part of a membrane-bound complex that couples electron transfer with translocation of ions across the membrane. This is Ion-translocating oxidoreductase complex subunit G from Cronobacter sakazakii (strain ATCC BAA-894) (Enterobacter sakazakii).